A 253-amino-acid polypeptide reads, in one-letter code: Bridging integrator 3 (253 aa).

The BAR domain maps to 9-232 (GQPKKQIVSK…LDQPGHSDEH (224 aa)). Coiled coils occupy residues 16-57 (VSKT…AMSK) and 120-151 (SLNM…KEKT).

The protein resides in the cytoplasm. It localises to the cytoskeleton. Involved in cytokinesis and septation where it has a role in the localization of F-actin. The protein is Bridging integrator 3 (Bin3) of Rattus norvegicus (Rat).